The sequence spans 165 residues: Nascent polypeptide-associated complex subunit alpha (165 aa).

The 65-residue stretch at 14-78 (NRNEKKAREL…AKVDNFTQRL (65 aa)) folds into the NAC-A/B domain. Residues 126-165 (LSNDDIDLVVQQTNATKGQAIKALKEHNGDIVNAIMSLSK) enclose the UBA domain.

This sequence belongs to the NAC-alpha family. In terms of assembly, part of the nascent polypeptide-associated complex (NAC), consisting of EGD2 and EGD1. NAC associates with ribosomes via EGD1.

It is found in the cytoplasm. The protein resides in the nucleus. Functionally, component of the nascent polypeptide-associated complex (NAC), a dynamic component of the ribosomal exit tunnel, protecting the emerging polypeptides from interaction with other cytoplasmic proteins to ensure appropriate nascent protein targeting. The NAC complex also promotes mitochondrial protein import by enhancing productive ribosome interactions with the outer mitochondrial membrane and blocks the inappropriate interaction of ribosomes translating non-secretory nascent polypeptides with translocation sites in the membrane of the endoplasmic reticulum. EGD2 may also be involved in transcription regulation. The chain is Nascent polypeptide-associated complex subunit alpha (EGD2) from Candida glabrata (strain ATCC 2001 / BCRC 20586 / JCM 3761 / NBRC 0622 / NRRL Y-65 / CBS 138) (Yeast).